The following is a 406-amino-acid chain: Enoyl-[acyl-carrier-protein] reductase [NADH] (406 aa).

Residues 48–53 (GASTGF), 74–75 (FE), 111–112 (DA), and 140–141 (IA) contribute to the NAD(+) site. Tyrosine 226 lines the substrate pocket. Catalysis depends on tyrosine 236, which acts as the Proton donor. Residues lysine 245 and 275–277 (LVT) each bind NAD(+).

It belongs to the TER reductase family. As to quaternary structure, monomer.

It carries out the reaction a 2,3-saturated acyl-[ACP] + NAD(+) = a (2E)-enoyl-[ACP] + NADH + H(+). The protein operates within lipid metabolism; fatty acid biosynthesis. Involved in the final reduction of the elongation cycle of fatty acid synthesis (FAS II). Catalyzes the reduction of a carbon-carbon double bond in an enoyl moiety that is covalently linked to an acyl carrier protein (ACP). This is Enoyl-[acyl-carrier-protein] reductase [NADH] from Coxiella burnetii (strain CbuK_Q154) (Coxiella burnetii (strain Q154)).